The following is a 195-amino-acid chain: Cysteine/O-acetylserine efflux protein (195 aa).

Over 1–7 (MTPTLLS) the chain is Periplasmic. A helical membrane pass occupies residues 8–28 (AFWTYTLITAMTPGPNNILAL). Topologically, residues 29 to 46 (SSATTHGFHQSTRVLAGM) are cytoplasmic. Residues 47–67 (SLGFLIVMLLCAGISFSLAVI) form a helical membrane-spanning segment. Residues 68–69 (DP) are Periplasmic-facing. A helical transmembrane segment spans residues 70-90 (AAVHLLSWAGAAYIVWLAWKI). Residues 91–104 (ATSPTKEDGLQTKP) are Cytoplasmic-facing. A helical transmembrane segment spans residues 105–125 (ISFWASFALQFVNVKIILYGV). Residues 126-141 (TALSTFVLPQTQALSW) lie on the Periplasmic side of the membrane. Residues 142 to 162 (IVGVSVLLAMIGTFGNVCWAL) traverse the membrane as a helical segment. Residues 163–176 (AGHLFQRLFRQYGR) lie on the Cytoplasmic side of the membrane. The chain crosses the membrane as a helical span at residues 177 to 194 (QLNIVLALLLIYCAVRIF). Residue Y195 is a topological domain, periplasmic.

It belongs to the Rht family.

The protein localises to the cell inner membrane. It catalyses the reaction O-acetyl-L-serine(in) = O-acetyl-L-serine(out). The catalysed reaction is L-cysteine(in) = L-cysteine(out). Functionally, exporter of O-acetylserine (OAS) and cysteine. This is Cysteine/O-acetylserine efflux protein (eamB) from Escherichia coli O157:H7.